A 397-amino-acid polypeptide reads, in one-letter code: Phosphoglycerate kinase (397 aa).

Substrate-binding positions include 21-23 (DFN), R36, 59-62 (HLGR), R119, and R156. ATP-binding positions include K207, G295, E326, and 353-356 (GGDS).

The protein belongs to the phosphoglycerate kinase family. As to quaternary structure, monomer.

The protein resides in the cytoplasm. It carries out the reaction (2R)-3-phosphoglycerate + ATP = (2R)-3-phospho-glyceroyl phosphate + ADP. Its pathway is carbohydrate degradation; glycolysis; pyruvate from D-glyceraldehyde 3-phosphate: step 2/5. The sequence is that of Phosphoglycerate kinase from Enterococcus faecalis (strain ATCC 700802 / V583).